We begin with the raw amino-acid sequence, 413 residues long: MVLPNFKENLEKYAKLLVTNGINVQPGHTVALSIDVEQAELAHLLVKEAYALGAAEVIVQWSDDTINRERFLHAEMNRIEEVPAYKKAEMEYLLEKKASRLGVRSSDPDAFNGVAPERLSAHAKAIGAAFKPMQVATQSNKVSWTVAAAAGKEWAKKVFPNASSDEEAVDLLWNQIFKTCRVYEKDPVRAWKEHADRLDAKARILNEAQFSALHYTAPGTDLTLGLPKNHVWESAGAINAQGESFLPNMPTEEVFTAPDFRRAYGYVSSTKPLSYNGNIIEGIKVTFKDGEIVDITADQGEKVMKNLVFNNNGARALGECALVPDSSPISQSGITFFNTLFDENASNHLAIGAAYATSVEGGADMTEEELKAAGLNRSDVHVDFIIGSNQMNIDGIHHDGSRVPIFRNGDWVI.

A divalent metal cation is bound by residues glutamate 253, glutamate 319, glutamate 343, histidine 348, histidine 381, and aspartate 383.

The protein belongs to the peptidase M29 family. As to quaternary structure, monomer. It depends on Co(2+) as a cofactor. Zn(2+) serves as cofactor. Requires Mg(2+) as cofactor.

Exhibits a high specificity towards peptides possessing arginine or aromatic amino acids at the N-terminus. Could be involved both in bacterial growth by supplying amino acids. The chain is Aminopeptidase PepS (pepS) from Streptococcus thermophilus.